The sequence spans 180 residues: Translation initiation factor IF-3 (180 aa).

This sequence belongs to the IF-3 family. As to quaternary structure, monomer.

The protein resides in the cytoplasm. IF-3 binds to the 30S ribosomal subunit and shifts the equilibrium between 70S ribosomes and their 50S and 30S subunits in favor of the free subunits, thus enhancing the availability of 30S subunits on which protein synthesis initiation begins. This is Translation initiation factor IF-3 from Mesoplasma florum (strain ATCC 33453 / NBRC 100688 / NCTC 11704 / L1) (Acholeplasma florum).